The following is a 313-amino-acid chain: Meiotically up-regulated gene 100 protein, mitochondrial (313 aa).

2 helical membrane passes run 147-167 and 178-198; these read VFDY…YTAG and SGFI…TLTF.

The protein localises to the mitochondrion inner membrane. Its function is as follows. Has a role in meiosis. This chain is Meiotically up-regulated gene 100 protein, mitochondrial (mug100), found in Schizosaccharomyces pombe (strain 972 / ATCC 24843) (Fission yeast).